We begin with the raw amino-acid sequence, 313 residues long: 2-phosphoglycerate kinase (313 aa).

The 88-residue stretch at 8–95 (SRILVTDKEY…LWRRVLKKHS (88 aa)) folds into the ATP-cone domain.

It belongs to the 2-phosphoglycerate kinase family. Requires a divalent metal cation as cofactor.

It carries out the reaction (2R)-2-phosphoglycerate + ATP = (2R)-2,3-bisphosphoglycerate + ADP + H(+). It functions in the pathway thermoadapter biosynthesis; cyclic 2,3-diphosphoglycerate biosynthesis; cyclic 2,3-diphosphoglycerate from 2-phospho-D-glycerate: step 1/2. In terms of biological role, catalyzes the phosphorylation of 2-phosphoglycerate to 2,3-diphosphoglycerate. Involved in the biosynthesis of cyclic 2,3-bisphosphoglycerate, a thermoprotectant. The polypeptide is 2-phosphoglycerate kinase (Methanococcus maripaludis (strain C6 / ATCC BAA-1332)).